Reading from the N-terminus, the 143-residue chain is Probable prefoldin subunit 2 (143 aa).

This sequence belongs to the prefoldin subunit beta family. As to quaternary structure, heterohexamer of two PFD-alpha type and four PFD-beta type subunits.

In terms of biological role, binds specifically to cytosolic chaperonin (c-CPN) and transfers target proteins to it. Binds to nascent polypeptide chain and promotes folding in an environment in which there are many competing pathways for nonnative proteins. In Drosophila melanogaster (Fruit fly), this protein is Probable prefoldin subunit 2.